The sequence spans 726 residues: Dipeptidyl-peptidase 5 (726 aa).

The first 19 residues, 1–19, serve as a signal peptide directing secretion; the sequence is MAPAKWLIASLAFASTGLA. N-linked (GlcNAc...) asparagine glycans are attached at residues Asn-96 and Asn-252. The tract at residues 268 to 292 is disordered; it reads VAEPINKRNGPRTPHGIEGASSSPV. The N-linked (GlcNAc...) asparagine glycan is linked to Asn-485. Residue Ser-558 is the Charge relay system of the active site. N-linked (GlcNAc...) asparagine glycosylation is present at Asn-605. Catalysis depends on charge relay system residues Asp-641 and His-673. A glycan (N-linked (GlcNAc...) asparagine) is linked at Asn-699.

The protein belongs to the peptidase S9C family.

Its subcellular location is the secreted. Extracellular dipeptidyl-peptidase which removes N-terminal dipeptides sequentially from polypeptides having unsubstituted N-termini. Contributes to pathogenicity. The protein is Dipeptidyl-peptidase 5 (DPP5) of Arthroderma otae (strain ATCC MYA-4605 / CBS 113480) (Microsporum canis).